A 423-amino-acid polypeptide reads, in one-letter code: Histidine--tRNA ligase (423 aa).

The protein belongs to the class-II aminoacyl-tRNA synthetase family. In terms of assembly, homodimer.

It is found in the cytoplasm. It catalyses the reaction tRNA(His) + L-histidine + ATP = L-histidyl-tRNA(His) + AMP + diphosphate + H(+). The protein is Histidine--tRNA ligase of Haemophilus ducreyi (strain 35000HP / ATCC 700724).